The sequence spans 80 residues: Exodeoxyribonuclease 7 small subunit (80 aa).

This sequence belongs to the XseB family. In terms of assembly, heterooligomer composed of large and small subunits.

The protein localises to the cytoplasm. It catalyses the reaction Exonucleolytic cleavage in either 5'- to 3'- or 3'- to 5'-direction to yield nucleoside 5'-phosphates.. Its function is as follows. Bidirectionally degrades single-stranded DNA into large acid-insoluble oligonucleotides, which are then degraded further into small acid-soluble oligonucleotides. This Pseudoalteromonas translucida (strain TAC 125) protein is Exodeoxyribonuclease 7 small subunit.